Consider the following 260-residue polypeptide: Indole-3-glycerol phosphate synthase (260 aa).

The protein belongs to the TrpC family.

The enzyme catalyses 1-(2-carboxyphenylamino)-1-deoxy-D-ribulose 5-phosphate + H(+) = (1S,2R)-1-C-(indol-3-yl)glycerol 3-phosphate + CO2 + H2O. The protein operates within amino-acid biosynthesis; L-tryptophan biosynthesis; L-tryptophan from chorismate: step 4/5. This is Indole-3-glycerol phosphate synthase from Koribacter versatilis (strain Ellin345).